Reading from the N-terminus, the 469-residue chain is ATP synthase subunit beta (469 aa).

157 to 164 lines the ATP pocket; it reads GGAGVGKT.

It belongs to the ATPase alpha/beta chains family. F-type ATPases have 2 components, CF(1) - the catalytic core - and CF(0) - the membrane proton channel. CF(1) has five subunits: alpha(3), beta(3), gamma(1), delta(1), epsilon(1). CF(0) has three main subunits: a(1), b(2) and c(9-12). The alpha and beta chains form an alternating ring which encloses part of the gamma chain. CF(1) is attached to CF(0) by a central stalk formed by the gamma and epsilon chains, while a peripheral stalk is formed by the delta and b chains.

It is found in the cell membrane. The catalysed reaction is ATP + H2O + 4 H(+)(in) = ADP + phosphate + 5 H(+)(out). Produces ATP from ADP in the presence of a proton gradient across the membrane. The catalytic sites are hosted primarily by the beta subunits. This Brevibacillus brevis (strain 47 / JCM 6285 / NBRC 100599) protein is ATP synthase subunit beta.